Reading from the N-terminus, the 447-residue chain is GTPase Der (447 aa).

EngA-type G domains lie at 4–165 and 180–357; these read KIIT…SIKE and LQIV…KIWN. Residues 10 to 17, 57 to 61, 119 to 122, 186 to 193, 233 to 237, and 298 to 301 contribute to the GTP site; these read GRPNVGKS, DTPGL, NKCE, GRPNAGKS, DTAGL, and NKWD. The KH-like domain maps to 358 to 443; that stretch reads KKITTGKLNE…PIRFTYVKNK (86 aa).

This sequence belongs to the TRAFAC class TrmE-Era-EngA-EngB-Septin-like GTPase superfamily. EngA (Der) GTPase family. Associates with the 50S ribosomal subunit.

Functionally, GTPase that plays an essential role in the late steps of ribosome biogenesis. In Rickettsia typhi (strain ATCC VR-144 / Wilmington), this protein is GTPase Der.